Reading from the N-terminus, the 166-residue chain is Large ribosomal subunit protein uL10 (166 aa).

The protein belongs to the universal ribosomal protein uL10 family. Part of the ribosomal stalk of the 50S ribosomal subunit. The N-terminus interacts with L11 and the large rRNA to form the base of the stalk. The C-terminus forms an elongated spine to which L12 dimers bind in a sequential fashion forming a multimeric L10(L12)X complex.

In terms of biological role, forms part of the ribosomal stalk, playing a central role in the interaction of the ribosome with GTP-bound translation factors. The sequence is that of Large ribosomal subunit protein uL10 from Streptococcus pneumoniae (strain 70585).